The primary structure comprises 253 residues: tRNA pseudouridine synthase A (253 aa).

Catalysis depends on aspartate 51, which acts as the Nucleophile. Tyrosine 110 contributes to the substrate binding site.

It belongs to the tRNA pseudouridine synthase TruA family. In terms of assembly, homodimer.

The enzyme catalyses uridine(38/39/40) in tRNA = pseudouridine(38/39/40) in tRNA. Its function is as follows. Formation of pseudouridine at positions 38, 39 and 40 in the anticodon stem and loop of transfer RNAs. This chain is tRNA pseudouridine synthase A, found in Wolinella succinogenes (strain ATCC 29543 / DSM 1740 / CCUG 13145 / JCM 31913 / LMG 7466 / NCTC 11488 / FDC 602W) (Vibrio succinogenes).